A 2360-amino-acid chain; its full sequence is Nucleoprotein TPR (2360 aa).

Ala-2 is modified (N-acetylalanine). The interval Ala-3 to Glu-13 is sufficient for interaction with TPR. The necessary for interaction with HSF1 stretch occupies residues Leu-14 to Lys-117. A coiled-coil region spans residues Lys-24–Leu-370. N6-acetyllysine is present on residues Lys-252, Lys-312, and Lys-345. At Ser-379 the chain carries Phosphoserine. The stretch at Leu-423–Leu-603 forms a coiled coil. An N6-acetyllysine mark is found at Lys-428, Lys-457, and Lys-477. Residues Leu-437–Asn-513 form a necessary for association to the NPC region. Phosphoserine is present on residues Ser-522, Ser-523, and Ser-632. Residues Glu-664 to Thr-1172 are a coiled coil. N6-acetyllysine is present on residues Lys-713, Lys-723, Lys-748, and Lys-755. Residues Leu-915 to Gly-924 are compositionally biased toward polar residues. Positions Leu-915–Ser-939 are disordered. Residues Pro-928 to Ser-939 are compositionally biased toward basic and acidic residues. Phosphoserine occurs at positions 1180 and 1185. Coiled-coil stretches lie at residues Glu-1215–Lys-1420 and Val-1472–Glu-1629. Residues Gln-1218–Met-1320 are necessary for interaction with HSF1. Disordered stretches follow at residues Lys-1479–Leu-1520 and Glu-1618–Val-1673. Basic and acidic residues-rich tracts occupy residues Leu-1503–Ser-1512 and Glu-1618–Pro-1630. The segment covering Glu-1632 to Ala-1651 has biased composition (polar residues). Residue Lys-1689 is modified to N6-acetyllysine. Thr-1691 is modified (phosphothreonine). Positions Gln-1801 to Leu-1826 are enriched in polar residues. Positions Gln-1801–His-2122 are disordered. The interval Ser-1811–Thr-1866 is sufficient and essential for mediating its nuclear import. Residues Thr-1866–Ala-1880 show a composition bias toward acidic residues. Polar residues predominate over residues Glu-1881 to Ser-1892. Ser-1892 bears the Phosphoserine mark. Over residues Gln-1923–Gly-1934 the composition is skewed to low complexity. 2 stretches are compositionally biased toward acidic residues: residues Asp-1945 to Asn-1986 and Asp-1996 to Glu-2017. Residues Glu-2023–Glu-2061 show a composition bias toward polar residues. Phosphoserine is present on residues Ser-2031, Ser-2034, Ser-2045, Ser-2047, and Ser-2070. Residues Arg-2103 and Arg-2108 each carry the omega-N-methylarginine modification. 2 positions are modified to phosphothreonine: Thr-2113 and Thr-2134. Ser-2152 is subject to Phosphoserine. Arg-2160 is subject to Omega-N-methylarginine. The span at Glu-2224 to Val-2241 shows a compositional bias: polar residues. Residues Glu-2224–Asn-2360 are disordered. Residues Thr-2242–Thr-2254 are compositionally biased toward low complexity. Composition is skewed to acidic residues over residues Ala-2256–Ser-2269 and Ser-2282–Asp-2296. A compositionally biased stretch (low complexity) spans Leu-2297–Pro-2317. Residues Arg-2340, Arg-2342, and Arg-2351 each carry the asymmetric dimethylarginine modification. Residues Gly-2349–Asn-2360 are compositionally biased toward gly residues.

Belongs to the TPR family. In terms of assembly, homodimer. Part of the nuclear pore complex (NPC). Associates with the XPO1/CRM1-mediated nuclear export complex, the Importin alpha/Importin beta receptor and the dynein 1 complex. Interacts (via C-terminal domain) with the KPNB1; the interaction occurs in a RanGTP-dependent manner. Interacts (via C-terminal region and phosphorylated form) with MAPK1/ERK2 (via phosphorylated form); the interaction requires dimerization of MAPK1/ERK2 and increases following EGF stimulation. Interacts with MAPK3/ERK1; the interaction increases following EGF stimulation. Interacts (via coiled coil region) with NUP153; the interaction is direct. Interacts with HSF1; the interaction increases in a stress-responsive manner and stimulates export of stress-induced HSP70 mRNA. Interacts with huntingtin/HTT; the interaction is inhibited by aggregated huntingtin/HTT forms with expanded polyglutamine stretch. Interacts with MAD1L1 (via N-terminal region), MAD2L1, and TTK; the interactions occurs in a microtubule-independent manner. Interacts (via middle region) with DYNLL1. Interacts with DCTN1, dynein, NUP153 and tubulin. Interacts with IFI204 (via C-terminal region). Interacts with IFI203. Interacts with MTA1. Interacts with ZC3HC1; this interaction mediates ZC3HC1 nuclear envelopes (NE)-association but also required for proper positioning of a substantial amount of TPR at the nuclear basket (NB). Post-translationally, phosphorylated. Phosphorylation occurs on serine and threonine residues (comprised in the C-terminal region) by MAPK1/ERK2 and stabilizes the interaction between these two proteins.

It localises to the nucleus. Its subcellular location is the nucleus membrane. The protein resides in the nucleus envelope. The protein localises to the nuclear pore complex. It is found in the cytoplasm. It localises to the cytoskeleton. Its subcellular location is the spindle. The protein resides in the chromosome. The protein localises to the centromere. It is found in the kinetochore. In terms of biological role, component of the nuclear pore complex (NPC), a complex required for the trafficking across the nuclear envelope. Functions as a scaffolding element in the nuclear phase of the NPC essential for normal nucleocytoplasmic transport of proteins and mRNAs, plays a role in the establishment of nuclear-peripheral chromatin compartmentalization in interphase, and in the mitotic spindle checkpoint signaling during mitosis. Involved in the quality control and retention of unspliced mRNAs in the nucleus; in association with NUP153, regulates the nuclear export of unspliced mRNA species bearing constitutive transport element (CTE) in a NXF1- and KHDRBS1-independent manner. Negatively regulates both the association of CTE-containing mRNA with large polyribosomes and translation initiation. Does not play any role in Rev response element (RRE)-mediated export of unspliced mRNAs. Implicated in nuclear export of mRNAs transcribed from heat shock gene promoters; associates both with chromatin in the HSP70 promoter and with mRNAs transcribed from this promoter under stress-induced conditions. Modulates the nucleocytoplasmic transport of activated MAPK1/ERK2 and huntingtin/HTT and may serve as a docking site for the XPO1/CRM1-mediated nuclear export complex. Also plays a role as a structural and functional element of the perinuclear chromatin distribution; involved in the formation and/or maintenance of NPC-associated perinuclear heterochromatin exclusion zones (HEZs). Finally, acts as a spatial regulator of the spindle-assembly checkpoint (SAC) response ensuring a timely and effective recruitment of spindle checkpoint proteins like MAD1L1 and MAD2L1 to unattached kinetochore during the metaphase-anaphase transition before chromosome congression. Its N-terminus is involved in activation of oncogenic kinases. Plays a role in the regulation of nuclear protein export. In Rattus norvegicus (Rat), this protein is Nucleoprotein TPR.